The primary structure comprises 733 residues: Nuclear hormone receptor family member nhr-66 (733 aa).

2 stretches are compositionally biased toward low complexity: residues 113–130 (PAIP…SQAS) and 165–185 (QQNR…QQQN). The segment at 113–190 (PAIPSSSSCS…AQQQNSMARK (78 aa)) is disordered. Positions 266–343 (VPACAICGTD…SGMDKNSVQH (78 aa)) form a DNA-binding region, nuclear receptor. NR C4-type zinc fingers lie at residues 269–289 (CAIC…CAAC) and 305–326 (CNKG…CRAC). Positions 361–396 (PDAEFEPSAKVSTVSEPSTSSGPSGGFNQNVSSPAG) are disordered. Low complexity predominate over residues 371 to 382 (VSTVSEPSTSSG). Positions 444-687 (CLGDWFRKPS…ACFNQMLDVE (244 aa)) constitute an NR LBD domain. The interval 676 to 687 (ADACFNQMLDVE) is AF-2. The disordered stretch occupies residues 691–733 (VSPDGQKDSEAEQGPSPVSVPEAARGSYQDDDMPPVLEKNCDL).

Belongs to the nuclear hormone receptor family. In terms of assembly, interacts with nuclear hormone receptor nhr-49; the interaction is direct. In terms of tissue distribution, widely expressed, including in hypodermis, gut, muscle, and neuronal cells of the ventral nerve cord, head, and tail ganglia. Expressed in the head ganglion in several sensory and interneurons, including AVA.

The protein resides in the nucleus. Functionally, transcription factor. Binds to regulatory elements and regulates transcription of target genes, including the potassium channel accessory subunit mps-2. Negatively regulates transcription of mps-2, thereby modulating age-dependent memory decline. In concert with nuclear hormone receptor nhr-49, involved in regulating target genes with roles in sphingolipid breakdown and lipid remodeling. Plays a role in modulating mitochondrial morphology and function. The chain is Nuclear hormone receptor family member nhr-66 from Caenorhabditis elegans.